The following is a 146-amino-acid chain: Neutral phospholipase A2 B (146 aa).

The N-terminal stretch at 1-21 is a signal peptide; that stretch reads MNPAHLLILAAVCVSPLGASS. Positions 22–27 are excised as a propeptide; it reads NRPMPL. 7 cysteine pairs are disulfide-bonded: Cys-38–Cys-98, Cys-53–Cys-145, Cys-55–Cys-71, Cys-70–Cys-126, Cys-77–Cys-119, Cys-87–Cys-112, and Cys-105–Cys-117. Tyr-54, Gly-56, and Gly-58 together coordinate Ca(2+). The active site involves His-74. Asp-75 is a Ca(2+) binding site. Asp-120 is a catalytic residue.

It belongs to the phospholipase A2 family. Group I subfamily. D49 sub-subfamily. It depends on Ca(2+) as a cofactor. In terms of tissue distribution, expressed by the venom gland.

The protein resides in the secreted. It catalyses the reaction a 1,2-diacyl-sn-glycero-3-phosphocholine + H2O = a 1-acyl-sn-glycero-3-phosphocholine + a fatty acid + H(+). Functionally, PLA2 catalyzes the calcium-dependent hydrolysis of the 2-acyl groups in 3-sn-phosphoglycerides. This is Neutral phospholipase A2 B from Naja sputatrix (Malayan spitting cobra).